The chain runs to 254 residues: Small ribosomal subunit protein uS2 (254 aa).

This sequence belongs to the universal ribosomal protein uS2 family.

This Legionella pneumophila subsp. pneumophila (strain Philadelphia 1 / ATCC 33152 / DSM 7513) protein is Small ribosomal subunit protein uS2.